Consider the following 96-residue polypeptide: Small ribosomal subunit protein bS6 (96 aa).

The protein belongs to the bacterial ribosomal protein bS6 family.

In terms of biological role, binds together with bS18 to 16S ribosomal RNA. This is Small ribosomal subunit protein bS6 from Thermobifida fusca (strain YX).